A 534-amino-acid chain; its full sequence is NAD(P)H-quinone oxidoreductase chain 4 1 (534 aa).

14 helical membrane passes run 6-26 (IPWL…IPLI), 34-54 (IRWY…TAFW), 87-107 (LSMP…LAAW), 113-133 (PKLF…VFAV), 136-156 (LLLF…LISI), 169-189 (FILY…ALAF), 209-229 (ALEL…LPIF), 243-263 (SAPV…YGLI), 277-297 (FAPL…LTAF), 311-331 (ISHM…GMNG), 332-352 (AVLQ…LSGV), 376-396 (FAMF…SGFV), 418-438 (IAIF…LSML), and 464-484 (IFVA…PKLA).

It belongs to the complex I subunit 4 family.

Its subcellular location is the cellular thylakoid membrane. The enzyme catalyses a plastoquinone + NADH + (n+1) H(+)(in) = a plastoquinol + NAD(+) + n H(+)(out). The catalysed reaction is a plastoquinone + NADPH + (n+1) H(+)(in) = a plastoquinol + NADP(+) + n H(+)(out). Functionally, NDH-1 shuttles electrons from NAD(P)H, via FMN and iron-sulfur (Fe-S) centers, to quinones in the respiratory chain. The immediate electron acceptor for the enzyme in this species is believed to be plastoquinone. Couples the redox reaction to proton translocation (for every two electrons transferred, four hydrogen ions are translocated across the cytoplasmic membrane), and thus conserves the redox energy in a proton gradient. The polypeptide is NAD(P)H-quinone oxidoreductase chain 4 1 (Picosynechococcus sp. (strain ATCC 27264 / PCC 7002 / PR-6) (Agmenellum quadruplicatum)).